Consider the following 209-residue polypeptide: Pyridoxine/pyridoxamine 5'-phosphate oxidase (209 aa).

Substrate contacts are provided by residues 2–5 (RVEY) and Lys-66. Residues 61-66 (RTVLCK), 76-77 (FT), Lys-83, and Gln-105 each bind FMN. 3 residues coordinate substrate: Tyr-123, Arg-127, and Ser-131. FMN contacts are provided by residues 140 to 141 (QS) and Trp-186. Position 192–194 (192–194 (RVH)) interacts with substrate. Arg-196 lines the FMN pocket.

This sequence belongs to the pyridoxamine 5'-phosphate oxidase family. In terms of assembly, homodimer. FMN serves as cofactor.

It catalyses the reaction pyridoxamine 5'-phosphate + O2 + H2O = pyridoxal 5'-phosphate + H2O2 + NH4(+). The enzyme catalyses pyridoxine 5'-phosphate + O2 = pyridoxal 5'-phosphate + H2O2. Its pathway is cofactor metabolism; pyridoxal 5'-phosphate salvage; pyridoxal 5'-phosphate from pyridoxamine 5'-phosphate: step 1/1. It functions in the pathway cofactor metabolism; pyridoxal 5'-phosphate salvage; pyridoxal 5'-phosphate from pyridoxine 5'-phosphate: step 1/1. In terms of biological role, catalyzes the oxidation of either pyridoxine 5'-phosphate (PNP) or pyridoxamine 5'-phosphate (PMP) into pyridoxal 5'-phosphate (PLP). The polypeptide is Pyridoxine/pyridoxamine 5'-phosphate oxidase (Mycobacterium sp. (strain JLS)).